Consider the following 189-residue polypeptide: S-protein homolog 26 (189 aa).

A signal peptide spans 1 to 25 (MISMNRLSILLFVFAFGLTMMSNTA).

The protein belongs to the plant self-incompatibility (S1) protein family.

The protein resides in the secreted. This chain is S-protein homolog 26, found in Arabidopsis thaliana (Mouse-ear cress).